A 118-amino-acid chain; its full sequence is Iron-sulfur cluster insertion protein ErpA (118 aa).

Iron-sulfur cluster is bound by residues cysteine 46, cysteine 110, and cysteine 112.

Belongs to the HesB/IscA family. Homodimer. Requires iron-sulfur cluster as cofactor.

Functionally, required for insertion of 4Fe-4S clusters for at least IspG. This chain is Iron-sulfur cluster insertion protein ErpA, found in Psychromonas ingrahamii (strain DSM 17664 / CCUG 51855 / 37).